Consider the following 547-residue polypeptide: MATKLIKHGSKAREQMLEGIDILADAVKVTLGPKGRNVLIEQSFGSPKITKDGVTVAKSIELKDKIRNAGAQLLKSAATKAAEVAGDGTTTATVLARALAREGNKLVAAGYNPMDLKRGMDLAVNAVVEEIKKSSKKINSQEEIAQVGTISSNGDKEIGEKIAKAMEEVGKEGVITVEEAKNFSFDVEVVKGMMFDRGYLSPYFVTNSEKMVAELENPFILLFEKKLSNLQPMLPILEAVVQSQRPLLIIAEDVEGEALATLVVNRLRGGLKVAAVKAPGFGDRRKAMMEDIAILTKGELITEDLGMKLENVSIKSLGTAKRVTISKENTVIVDGNGDKKNIEDRVLQIKSQIAETTSDYDKEKLQERLAKLSGGVAVLKVGGATEVEVKERKDRVEDALAATRAAVEEGVVAGGGVTLLHASQPLTKLKVENKDQQAGIEIVIEALKDPLKQIVENAGENGGVVVGKLLEHKDKNYGFNAQDMQYVDMIKAGIIDPAKVVRTALQDAASVASLIITTETLIVDEPSDKAEPMPMRGGMGGMGGMDF.

ATP contacts are provided by residues 30–33, Lys51, 87–91, Gly415, and Asp496; these read TLGP and DGTTT. Residues 527–547 are disordered; that stretch reads SDKAEPMPMRGGMGGMGGMDF. The span at 537 to 547 shows a compositional bias: gly residues; that stretch reads GGMGGMGGMDF.

It belongs to the chaperonin (HSP60) family. As to quaternary structure, forms a cylinder of 14 subunits composed of two heptameric rings stacked back-to-back. Interacts with the co-chaperonin GroES.

Its subcellular location is the cytoplasm. It catalyses the reaction ATP + H2O + a folded polypeptide = ADP + phosphate + an unfolded polypeptide.. In terms of biological role, together with its co-chaperonin GroES, plays an essential role in assisting protein folding. The GroEL-GroES system forms a nano-cage that allows encapsulation of the non-native substrate proteins and provides a physical environment optimized to promote and accelerate protein folding. The protein is Chaperonin GroEL of Rickettsia rickettsii (strain Sheila Smith).